The following is a 348-amino-acid chain: Dihydroorotase (348 aa).

Residues H17 and H19 each coordinate Zn(2+). Substrate-binding positions include 19 to 21 and N45; that span reads HLR. 3 residues coordinate Zn(2+): K103, H140, and H178. An N6-carboxylysine modification is found at K103. H140 is a substrate binding site. Substrate is bound at residue L223. D251 serves as a coordination point for Zn(2+). D251 is a catalytic residue. Substrate contacts are provided by H255 and A267.

This sequence belongs to the metallo-dependent hydrolases superfamily. DHOase family. Class II DHOase subfamily. Homodimer. Zn(2+) serves as cofactor.

The catalysed reaction is (S)-dihydroorotate + H2O = N-carbamoyl-L-aspartate + H(+). It participates in pyrimidine metabolism; UMP biosynthesis via de novo pathway; (S)-dihydroorotate from bicarbonate: step 3/3. Catalyzes the reversible cyclization of carbamoyl aspartate to dihydroorotate. This chain is Dihydroorotase, found in Edwardsiella ictaluri (strain 93-146).